We begin with the raw amino-acid sequence, 460 residues long: GTPase Der (460 aa).

2 consecutive EngA-type G domains span residues 2 to 164 (KKVI…DDEI) and 199 to 370 (IKVG…ANFT). GTP-binding positions include 8 to 15 (GRPNVGKS), 55 to 59 (DSGGL), 116 to 119 (NKID), 205 to 212 (GRVNVGKS), 252 to 256 (DTAGI), and 316 to 319 (NKWD). The 84-residue stretch at 371 to 454 (QKIATSKLND…PVILLPRKRG (84 aa)) folds into the KH-like domain.

Belongs to the TRAFAC class TrmE-Era-EngA-EngB-Septin-like GTPase superfamily. EngA (Der) GTPase family. In terms of assembly, associates with the 50S ribosomal subunit.

In terms of biological role, GTPase that plays an essential role in the late steps of ribosome biogenesis. The polypeptide is GTPase Der (Campylobacter hominis (strain ATCC BAA-381 / DSM 21671 / CCUG 45161 / LMG 19568 / NCTC 13146 / CH001A)).